Consider the following 479-residue polypeptide: Poly(A) polymerase catalytic subunit (479 aa).

Catalysis depends on residues aspartate 202 and aspartate 204. The Ca(2+) site is built by aspartate 202, aspartate 204, and aspartate 253.

Belongs to the poxviridae poly(A) polymerase catalytic subunit family. As to quaternary structure, heterodimer of a large (catalytic) subunit and a small (regulatory) subunit.

It catalyses the reaction RNA(n) + ATP = RNA(n)-3'-adenine ribonucleotide + diphosphate. Functionally, polymerase that creates the 3'-poly(A) tail of mRNA's. This is Poly(A) polymerase catalytic subunit (OPG063) from Bos taurus (Bovine).